Reading from the N-terminus, the 101-residue chain is Acylphosphatase (101 aa).

An Acylphosphatase-like domain is found at 12–98; the sequence is RVHVFVTGRV…EGLRGFEVKR (87 aa). Residues arginine 27 and asparagine 45 contribute to the active site.

This sequence belongs to the acylphosphatase family.

It catalyses the reaction an acyl phosphate + H2O = a carboxylate + phosphate + H(+). The polypeptide is Acylphosphatase (acyP) (Trichormus variabilis (strain ATCC 29413 / PCC 7937) (Anabaena variabilis)).